The primary structure comprises 99 residues: UPF0125 protein BU253 (99 aa).

The protein belongs to the UPF0125 (RnfH) family.

The polypeptide is UPF0125 protein BU253 (Buchnera aphidicola subsp. Acyrthosiphon pisum (strain APS) (Acyrthosiphon pisum symbiotic bacterium)).